A 364-amino-acid chain; its full sequence is Probable methyltransferase ICS2 (364 aa).

Residues Tyr-18, Cys-61, Asp-98, Leu-99, Ser-133, and Phe-134 each contribute to the S-adenosyl-L-homocysteine site. 4 residues coordinate Mg(2+): Asn-172, Asp-258, Phe-260, and Asn-261.

It belongs to the methyltransferase superfamily. Type-7 methyltransferase family. Mg(2+) is required as a cofactor.

No detectable N-methyltransferase activity. The chain is Probable methyltransferase ICS2 from Camellia irrawadiensis (Burmese tea).